Consider the following 366-residue polypeptide: Spermine synthase (366 aa).

Residue A2 is modified to N-acetylalanine. S57 carries the phosphoserine modification. One can recognise a PABS domain in the interval R122 to K362. Residue Q148 coordinates S-adenosyl 3-(methylsulfanyl)propylamine. Residues Y177 and D201 each coordinate spermidine. S-adenosyl 3-(methylsulfanyl)propylamine-binding positions include E220 and D255–C256. D276 serves as the catalytic Proton acceptor. Spermidine is bound by residues Y351 and E353.

The protein belongs to the spermidine/spermine synthase family. Homodimer. Dimerization is mediated through the N-terminal domain and seems to be required for activity as deletion of the N-terminal domain causes complete loss of activity.

The catalysed reaction is S-adenosyl 3-(methylsulfanyl)propylamine + spermidine = spermine + S-methyl-5'-thioadenosine + H(+). It participates in amine and polyamine biosynthesis; spermine biosynthesis; spermine from spermidine: step 1/1. Catalyzes the production of spermine from spermidine and decarboxylated S-adenosylmethionine (dcSAM). Required for normal viability, growth and fertility. The chain is Spermine synthase (Sms) from Mus musculus (Mouse).